We begin with the raw amino-acid sequence, 780 residues long: TSC22 domain family protein 2 (780 aa).

5 disordered regions span residues 20–86 (AQVA…TVSP), 126–158 (TSAP…PTTC), 235–499 (AHGP…PGGP), 587–607 (LVGQ…PPLS), and 736–780 (LSSN…VSSA). Residues 28 to 37 (EDTESLDDPD) show a composition bias toward acidic residues. Over residues 126-146 (TSAPAPGAPGGPQLAGSSAGP) the composition is skewed to low complexity. Positions 241 to 262 (GTDSSLTAVSQLPPSEKMSQPT) are enriched in polar residues. Low complexity-rich tracts occupy residues 297 to 316 (GAAT…QPQG), 344 to 361 (PAVG…AYPQ), and 395 to 412 (QPSS…ATLP). The span at 415 to 434 (TGQNASSVGAQLMGASSQPS) shows a compositional bias: polar residues. Low complexity predominate over residues 453 to 468 (QPTGVPPATVGGVVQP). The segment covering 736-756 (LSSNDQLSQLPTQQANPGSTS) has biased composition (polar residues). The segment covering 765-774 (PPQPTQPPQQ) has biased composition (pro residues).

It belongs to the TSC-22/Dip/Bun family. In terms of assembly, interacts with NRBP1. Interacts with PKM isoform M2; the interaction results in reduced nuclear levels of PKM isoform M2, leading to repression of cyclin CCND1 transcription and reduced cell growth. Interacts with WDR77.

Its function is as follows. Reduces the level of nuclear PKM isoform M2 which results in repression of cyclin CCND1 transcription and reduced cell growth. This Homo sapiens (Human) protein is TSC22 domain family protein 2.